The chain runs to 72 residues: Protein kish-A (72 aa).

Residues 1–26 form the signal peptide; that stretch reads MSAIFNFQSLLTVILLLICTCAYIRS. The Extracellular portion of the chain corresponds to 27–53; it reads LAPSLLDKNKTGLLGIFWKCARIGERK. An N-linked (GlcNAc...) asparagine glycan is attached at Asn-35. A helical transmembrane segment spans residues 54–71; the sequence is SPYVAVCCVVMAFSILFV. A topological domain (cytoplasmic) is located at residue Gln-72.

It belongs to the KISH family.

The protein localises to the golgi apparatus membrane. Functionally, involved in the early part of the secretory pathway. In Gallus gallus (Chicken), this protein is Protein kish-A (TMEM167A).